Here is a 183-residue protein sequence, read N- to C-terminus: Ribosome rescue factor SmrB (183 aa).

In terms of domain architecture, Smr spans 98-173 (LDLHGLTQLQ…GDAALLVLIE (76 aa)).

It belongs to the SmrB family. Associates with collided ribosomes, but not with correctly translating polysomes.

In terms of biological role, acts as a ribosome collision sensor. Detects stalled/collided disomes (pairs of ribosomes where the leading ribosome is stalled and a second ribosome has collided with it) and endonucleolytically cleaves mRNA at the 5' boundary of the stalled ribosome. Stalled/collided disomes form a new interface (primarily via the 30S subunits) that binds SmrB. Cleaved mRNA becomes available for tmRNA ligation, leading to ribosomal subunit dissociation and rescue of stalled ribosomes. The polypeptide is Ribosome rescue factor SmrB (Salmonella agona (strain SL483)).